Reading from the N-terminus, the 371-residue chain is Chaperone protein DnaJ (371 aa).

The J domain maps to 5–69; sequence DYYEVLGLSK…QKRAQYDQFG (65 aa). A CR-type zinc finger spans residues 133-215; sequence GKELNVEIPV…CHGSGKVRKR (83 aa). Cys146, Cys149, Cys163, Cys166, Cys189, Cys192, Cys203, and Cys206 together coordinate Zn(2+). CXXCXGXG motif repeat units follow at residues 146-153, 163-170, 189-196, and 203-210; these read CDTCKGSG, CKHCSGSG, CSHCSGTG, and CTTCHGSG.

This sequence belongs to the DnaJ family. Homodimer. Requires Zn(2+) as cofactor.

The protein localises to the cytoplasm. Participates actively in the response to hyperosmotic and heat shock by preventing the aggregation of stress-denatured proteins and by disaggregating proteins, also in an autonomous, DnaK-independent fashion. Unfolded proteins bind initially to DnaJ; upon interaction with the DnaJ-bound protein, DnaK hydrolyzes its bound ATP, resulting in the formation of a stable complex. GrpE releases ADP from DnaK; ATP binding to DnaK triggers the release of the substrate protein, thus completing the reaction cycle. Several rounds of ATP-dependent interactions between DnaJ, DnaK and GrpE are required for fully efficient folding. Also involved, together with DnaK and GrpE, in the DNA replication of plasmids through activation of initiation proteins. The polypeptide is Chaperone protein DnaJ (Bacillus cereus (strain 03BB102)).